A 228-amino-acid polypeptide reads, in one-letter code: uncharacterized protein (228 aa).

The tract at residues 1–34 (MPRDTKPYSRPANAPRPGVKTERSNQFKAASTKY) is disordered.

This is an uncharacterized protein from Orgyia pseudotsugata (Douglas-fir tussock moth).